Reading from the N-terminus, the 423-residue chain is T-box transcription factor T-A (423 aa).

Positions 44 to 212 (LWTKFKELTN…HNPFAKAFLD (169 aa)) form a DNA-binding region, T-box. Basic and acidic residues predominate over residues 215 to 227 (ERSDHKEVPDHST). Disordered regions lie at residues 215–234 (ERSD…QSGY) and 280–304 (AAPY…SSGS). Over residues 290–304 (RSTTTNNYMDNSSGS) the composition is skewed to polar residues.

As to quaternary structure, monomer. Binds DNA as a monomer. As to expression, first expressed at the dorsal side of the blastula embryo. Expressed in the germ ring, shield and chordamesoderm during gastrulation and is restricted to the notochord and tailbud during somitogenesis (at protein level).

The protein resides in the nucleus. Its function is as follows. Involved in the transcriptional regulation of genes required for mesoderm differentiation, including itself. Indispensable for the formation of the notochord and the tail structure. Functions together with tbx16/spadetail in development of trunk and tail mesoderm. Functions by itself early in development to repress medial floor plate and promote notochord fate but at later times, functions together with tbx16/spadetail to promote medial floor plate formation. Acts in a parallel pathway to, but cooperates with, non-canonical wnt-signaling during tail formation. Required for the morphogenesis of Kupffer's vesicle and regulates left-right asymmetry. The chain is T-box transcription factor T-A (tbxta) from Danio rerio (Zebrafish).